A 205-amino-acid chain; its full sequence is Imidazole glycerol phosphate synthase subunit HisH (205 aa).

The Glutamine amidotransferase type-1 domain maps to 1–205 (MIALVDYGGG…FFKMALGDKK (205 aa)). Catalysis depends on Cys-79, which acts as the Nucleophile. Residues His-181 and Glu-183 contribute to the active site.

In terms of assembly, heterodimer of HisH and HisF.

It is found in the cytoplasm. It carries out the reaction 5-[(5-phospho-1-deoxy-D-ribulos-1-ylimino)methylamino]-1-(5-phospho-beta-D-ribosyl)imidazole-4-carboxamide + L-glutamine = D-erythro-1-(imidazol-4-yl)glycerol 3-phosphate + 5-amino-1-(5-phospho-beta-D-ribosyl)imidazole-4-carboxamide + L-glutamate + H(+). The catalysed reaction is L-glutamine + H2O = L-glutamate + NH4(+). It participates in amino-acid biosynthesis; L-histidine biosynthesis; L-histidine from 5-phospho-alpha-D-ribose 1-diphosphate: step 5/9. Its function is as follows. IGPS catalyzes the conversion of PRFAR and glutamine to IGP, AICAR and glutamate. The HisH subunit catalyzes the hydrolysis of glutamine to glutamate and ammonia as part of the synthesis of IGP and AICAR. The resulting ammonia molecule is channeled to the active site of HisF. The protein is Imidazole glycerol phosphate synthase subunit HisH of Dehalococcoides mccartyi (strain ATCC BAA-2266 / KCTC 15142 / 195) (Dehalococcoides ethenogenes (strain 195)).